Consider the following 405-residue polypeptide: Phosphopentomutase (405 aa).

Mn(2+)-binding residues include D10, D303, H308, D344, H345, and H356.

It belongs to the phosphopentomutase family. Mn(2+) is required as a cofactor.

The protein resides in the cytoplasm. The enzyme catalyses 2-deoxy-alpha-D-ribose 1-phosphate = 2-deoxy-D-ribose 5-phosphate. It catalyses the reaction alpha-D-ribose 1-phosphate = D-ribose 5-phosphate. The protein operates within carbohydrate degradation; 2-deoxy-D-ribose 1-phosphate degradation; D-glyceraldehyde 3-phosphate and acetaldehyde from 2-deoxy-alpha-D-ribose 1-phosphate: step 1/2. Isomerase that catalyzes the conversion of deoxy-ribose 1-phosphate (dRib-1-P) and ribose 1-phosphate (Rib-1-P) to deoxy-ribose 5-phosphate (dRib-5-P) and ribose 5-phosphate (Rib-5-P), respectively. This Shewanella denitrificans (strain OS217 / ATCC BAA-1090 / DSM 15013) protein is Phosphopentomutase.